The chain runs to 623 residues: Chaperone protein DnaK (623 aa).

Thr175 carries the post-translational modification Phosphothreonine; by autocatalysis. Positions 580–623 are disordered; it reads PEGAQGAGFDPNNMGGANAGNASAGNDKKDDNVVDADFKVEDDK. Low complexity predominate over residues 591–604; it reads NNMGGANAGNASAG. A compositionally biased stretch (basic and acidic residues) spans 605–623; that stretch reads NDKKDDNVVDADFKVEDDK.

This sequence belongs to the heat shock protein 70 family.

In terms of biological role, acts as a chaperone. The chain is Chaperone protein DnaK from Clostridium botulinum (strain Hall / ATCC 3502 / NCTC 13319 / Type A).